A 110-amino-acid polypeptide reads, in one-letter code: UPF0339 protein PA0329 (110 aa).

2 tandem repeats follow at residues 10-58 and 61-109. Residues 91–110 are disordered; the sequence is EAGVQSVKRATPEAGLSDES.

It belongs to the UPF0339 family. Duplicated subfamily.

The chain is UPF0339 protein PA0329 from Pseudomonas aeruginosa (strain ATCC 15692 / DSM 22644 / CIP 104116 / JCM 14847 / LMG 12228 / 1C / PRS 101 / PAO1).